The chain runs to 350 residues: Hydroxymethylglutaryl-CoA synthase (350 aa).

Residue E83 is the Proton donor/acceptor of the active site. C115 (acyl-thioester intermediate) is an active-site residue. Residues C115 and T156 each coordinate (3S)-3-hydroxy-3-methylglutaryl-CoA. Residue R204 participates in CoA binding. (3S)-3-hydroxy-3-methylglutaryl-CoA is bound by residues T206 and H239. Residue H239 is the Proton donor/acceptor of the active site. K244 contacts CoA. (3S)-3-hydroxy-3-methylglutaryl-CoA is bound by residues N271 and S301.

This sequence belongs to the thiolase-like superfamily. Archaeal HMG-CoA synthase family. As to quaternary structure, interacts with acetoacetyl-CoA thiolase that catalyzes the precedent step in the pathway and with a DUF35 protein. The acetoacetyl-CoA thiolase/HMG-CoA synthase complex channels the intermediate via a fused CoA-binding site, which allows for efficient coupling of the endergonic thiolase reaction with the exergonic HMGCS reaction.

It carries out the reaction acetoacetyl-CoA + acetyl-CoA + H2O = (3S)-3-hydroxy-3-methylglutaryl-CoA + CoA + H(+). It participates in metabolic intermediate biosynthesis; (R)-mevalonate biosynthesis; (R)-mevalonate from acetyl-CoA: step 2/3. In terms of biological role, catalyzes the condensation of acetyl-CoA with acetoacetyl-CoA to form 3-hydroxy-3-methylglutaryl-CoA (HMG-CoA). Functions in the mevalonate (MVA) pathway leading to isopentenyl diphosphate (IPP), a key precursor for the biosynthesis of isoprenoid compounds that are building blocks of archaeal membrane lipids. The sequence is that of Hydroxymethylglutaryl-CoA synthase from Thermococcus sibiricus (strain DSM 12597 / MM 739).